The following is a 513-amino-acid chain: ATP synthase subunit alpha (513 aa).

169–176 (GDRQTGKT) contributes to the ATP binding site.

This sequence belongs to the ATPase alpha/beta chains family. F-type ATPases have 2 components, CF(1) - the catalytic core - and CF(0) - the membrane proton channel. CF(1) has five subunits: alpha(3), beta(3), gamma(1), delta(1), epsilon(1). CF(0) has three main subunits: a(1), b(2) and c(9-12). The alpha and beta chains form an alternating ring which encloses part of the gamma chain. CF(1) is attached to CF(0) by a central stalk formed by the gamma and epsilon chains, while a peripheral stalk is formed by the delta and b chains.

The protein localises to the cell inner membrane. It carries out the reaction ATP + H2O + 4 H(+)(in) = ADP + phosphate + 5 H(+)(out). Functionally, produces ATP from ADP in the presence of a proton gradient across the membrane. The alpha chain is a regulatory subunit. The polypeptide is ATP synthase subunit alpha (Ruegeria sp. (strain TM1040) (Silicibacter sp.)).